Reading from the N-terminus, the 505-residue chain is Probable alpha-L-arabinofuranosidase C (505 aa).

3 N-linked (GlcNAc...) asparagine glycosylation sites follow: N152, N181, and N269.

This sequence belongs to the glycosyl hydrolase 51 family.

It is found in the secreted. The catalysed reaction is Hydrolysis of terminal non-reducing alpha-L-arabinofuranoside residues in alpha-L-arabinosides.. Its pathway is glycan metabolism; L-arabinan degradation. Functionally, alpha-L-arabinofuranosidase involved in the degradation of arabinoxylan, a major component of plant hemicellulose. Acts only on small linear 1,5-alpha-linked L-arabinofuranosyl oligosaccharides. The chain is Probable alpha-L-arabinofuranosidase C (abfC) from Aspergillus niger (strain ATCC MYA-4892 / CBS 513.88 / FGSC A1513).